The primary structure comprises 206 residues: LexA repressor (206 aa).

Positions 28 to 48 (RAEIARELGFRSANAAEEHLK) form a DNA-binding region, H-T-H motif. Active-site for autocatalytic cleavage activity residues include S123 and K160.

This sequence belongs to the peptidase S24 family. In terms of assembly, homodimer.

The enzyme catalyses Hydrolysis of Ala-|-Gly bond in repressor LexA.. Represses a number of genes involved in the response to DNA damage (SOS response), including recA and lexA. In the presence of single-stranded DNA, RecA interacts with LexA causing an autocatalytic cleavage which disrupts the DNA-binding part of LexA, leading to derepression of the SOS regulon and eventually DNA repair. The sequence is that of LexA repressor from Vibrio campbellii (strain ATCC BAA-1116).